The following is a 238-amino-acid chain: ATP synthase subunit a (238 aa).

Helical transmembrane passes span 18–38 (LTLLAVCIVTIAVIFAFVFWA), 76–96 (YSLLLFTIFLFVAVANNLGLF), 114–134 (NLAFDLALSLFITLMVHIEGV), 166–186 (SLAIRLFGNIFAGEVVTGLIV), and 193–213 (VYWWPIAFLVNMAWTAFSVFI).

The protein belongs to the ATPase A chain family. As to quaternary structure, F-type ATPases have 2 components, CF(1) - the catalytic core - and CF(0) - the membrane proton channel. CF(1) has five subunits: alpha(3), beta(3), gamma(1), delta(1), epsilon(1). CF(0) has three main subunits: a(1), b(2) and c(9-12). The alpha and beta chains form an alternating ring which encloses part of the gamma chain. CF(1) is attached to CF(0) by a central stalk formed by the gamma and epsilon chains, while a peripheral stalk is formed by the delta and b chains.

It localises to the cell membrane. In terms of biological role, key component of the proton channel; it plays a direct role in the translocation of protons across the membrane. The polypeptide is ATP synthase subunit a (Streptococcus pyogenes serotype M49 (strain NZ131)).